We begin with the raw amino-acid sequence, 266 residues long: Ribonuclease 3 (266 aa).

An RNase III domain is found at 34 to 158 (IERCQEILGY…VIAALYIDGG (125 aa)). Glutamate 72 serves as a coordination point for Mg(2+). Aspartate 76 is an active-site residue. Mg(2+)-binding residues include aspartate 144 and glutamate 147. Residue glutamate 147 is part of the active site. The DRBM domain occupies 185 to 254 (NHKSVLQQFA…AANALAELHN (70 aa)).

This sequence belongs to the ribonuclease III family. As to quaternary structure, homodimer. It depends on Mg(2+) as a cofactor.

The protein resides in the cytoplasm. The enzyme catalyses Endonucleolytic cleavage to 5'-phosphomonoester.. Its function is as follows. Digests double-stranded RNA. Involved in the processing of primary rRNA transcript to yield the immediate precursors to the large and small rRNAs (23S and 16S). Processes some mRNAs, and tRNAs when they are encoded in the rRNA operon. Processes pre-crRNA and tracrRNA of type II CRISPR loci if present in the organism. The sequence is that of Ribonuclease 3 from Rhodopirellula baltica (strain DSM 10527 / NCIMB 13988 / SH1).